A 147-amino-acid polypeptide reads, in one-letter code: Hemoglobin subunit gamma-1 (147 aa).

Gly2 is modified (N-acetylglycine). The Globin domain maps to 3-147 (HFTEEDKATI…VASALSSRYH (145 aa)). Thr13 carries the phosphothreonine modification. Phosphoserine is present on residues Ser45, Ser51, and Ser53. Lys60 is modified (N6-acetyllysine). His64 contacts heme b. At Lys83 the chain carries N6-acetyllysine. His93 is a heme b binding site. Position 94 is an S-nitrosocysteine (Cys94). Residue Ser140 is modified to Phosphoserine.

The protein belongs to the globin family. In terms of assembly, heterotetramer of two alpha chains and two gamma chains in fetal hemoglobin (Hb F). The ratio of gamma-G to gamma-A chains in is approximately 2:1 in infant chimpanzee, and 1:2 in the adult. As to expression, red blood cells.

Gamma chains make up the fetal hemoglobin F, in combination with alpha chains. The chain is Hemoglobin subunit gamma-1 (HBG1) from Pan troglodytes (Chimpanzee).